Here is a 277-residue protein sequence, read N- to C-terminus: Caspase-3 (277 aa).

N-acetylmethionine is present on Met1. 2 consecutive propeptides follow at residues 1–9 (MENTENSVD) and 10–28 (AKSF…KSMD). Lys11 carries the post-translational modification N6-acetyllysine. Ser26 carries the post-translational modification Phosphoserine. Active-site residues include His121 and Cys163. Cys163 bears the S-nitrosocysteine; in inhibited form mark.

Belongs to the peptidase C14A family. Heterotetramer that consists of two anti-parallel arranged heterodimers, each one formed by a 17 kDa (p17) and a 12 kDa (p12) subunit. Interacts with BIRC6/bruce. Post-translationally, cleavage by granzyme B, caspase-6, caspase-8 and caspase-10 generates the two active subunits. Additional processing of the propeptides is likely due to the autocatalytic activity of the activated protease. Active heterodimers between the small subunit of caspase-7 protease and the large subunit of caspase-3 also occur and vice versa. S-nitrosylated on its catalytic site cysteine in unstimulated cell lines and denitrosylated upon activation of the Fas apoptotic pathway, associated with an increase in intracellular caspase activity. Fas therefore activates caspase-3 not only by inducing the cleavage of the caspase zymogen to its active subunits, but also by stimulating the denitrosylation of its active site thiol. In terms of processing, ubiquitinated by BIRC6; this activity is inhibited by DIABLO/SMAC.

It is found in the cytoplasm. It carries out the reaction Strict requirement for an Asp residue at positions P1 and P4. It has a preferred cleavage sequence of Asp-Xaa-Xaa-Asp-|- with a hydrophobic amino-acid residue at P2 and a hydrophilic amino-acid residue at P3, although Val or Ala are also accepted at this position.. Its activity is regulated as follows. Inhibited by BIRC6; following inhibition of BIRC6-caspase binding by DIABLO/SMAC, BIRC6 is subjected to caspase cleavage, leading to an increase in active caspases. Its function is as follows. Involved in the activation cascade of caspases responsible for apoptosis execution. At the onset of apoptosis, it proteolytically cleaves poly(ADP-ribose) polymerase PARP1 at a '216-Asp-|-Gly-217' bond. Cleaves and activates sterol regulatory element binding proteins (SREBPs) between the basic helix-loop-helix leucine zipper domain and the membrane attachment domain. Cleaves and activates caspase-6, -7 and -9 (CASP6, CASP7 and CASP9, respectively). Cleaves and inactivates interleukin-18 (IL18). Triggers cell adhesion in sympathetic neurons through RET cleavage. Cleaves IL-1 beta between an Asp and an Ala, releasing the mature cytokine which is involved in a variety of inflammatory processes. Cleaves and inhibits serine/threonine-protein kinase AKT1 in response to oxidative stress. Acts as an inhibitor of type I interferon production during virus-induced apoptosis by mediating cleavage of antiviral proteins CGAS, IRF3 and MAVS, thereby preventing cytokine overproduction. Also involved in pyroptosis by mediating cleavage and activation of gasdermin-E (GSDME). Cleaves XRCC4 and phospholipid scramblase proteins XKR4, XKR8 and XKR9, leading to promote phosphatidylserine exposure on apoptotic cell surface. Cleaves BIRC6 following inhibition of BIRC6-caspase binding by DIABLO/SMAC. The chain is Caspase-3 (CASP3) from Canis lupus familiaris (Dog).